Reading from the N-terminus, the 602-residue chain is Probable translation initiation factor IF-2 (602 aa).

Residues Leu10–Met227 enclose the tr-type G domain. The G1 stretch occupies residues Gly19–Thr26. Position 19-26 (Gly19–Thr26) interacts with GTP. Positions Glu44 to Glu48 are G2. The G3 stretch occupies residues Asp83–Gly86. GTP contacts are provided by residues Asp83 to His87 and Asn137 to Asp140. Positions Asn137 to Asp140 are G4. Residues Ser205–Lys207 form a G5 region.

The protein belongs to the TRAFAC class translation factor GTPase superfamily. Classic translation factor GTPase family. IF-2 subfamily.

In terms of biological role, function in general translation initiation by promoting the binding of the formylmethionine-tRNA to ribosomes. Seems to function along with eIF-2. In Sulfurisphaera tokodaii (strain DSM 16993 / JCM 10545 / NBRC 100140 / 7) (Sulfolobus tokodaii), this protein is Probable translation initiation factor IF-2.